The following is a 208-amino-acid chain: Cytochrome c biogenesis ATP-binding export protein CcmA (208 aa).

An ABC transporter domain is found at 2–206 (LEAKELTCAR…IRLTAEGRDE (205 aa)). 34 to 41 (GPNGAGKT) lines the ATP pocket.

Belongs to the ABC transporter superfamily. CcmA exporter (TC 3.A.1.107) family. The complex is composed of two ATP-binding proteins (CcmA) and two transmembrane proteins (CcmB).

The protein resides in the cell inner membrane. The catalysed reaction is heme b(in) + ATP + H2O = heme b(out) + ADP + phosphate + H(+). Part of the ABC transporter complex CcmAB involved in the biogenesis of c-type cytochromes; once thought to export heme, this seems not to be the case, but its exact role is uncertain. Responsible for energy coupling to the transport system. This chain is Cytochrome c biogenesis ATP-binding export protein CcmA, found in Tatumella citrea (Pantoea citrea).